A 228-amino-acid chain; its full sequence is UPF0758 protein STER_1430 (228 aa).

In terms of domain architecture, MPN spans 103–225 (QIMSSQQVAR…YYSFREERED (123 aa)). Residues His-174, His-176, and Asp-187 each contribute to the Zn(2+) site. Positions 174-187 (HNHPSGEAYPSRND) match the JAMM motif motif.

The protein belongs to the UPF0758 family.

The sequence is that of UPF0758 protein STER_1430 from Streptococcus thermophilus (strain ATCC BAA-491 / LMD-9).